The chain runs to 151 residues: Deoxyuridine 5'-triphosphate nucleotidohydrolase (151 aa).

Substrate-binding positions include 70–72 (RSG), asparagine 83, 87–89 (LID), and methionine 97.

The protein belongs to the dUTPase family. Mg(2+) is required as a cofactor.

The enzyme catalyses dUTP + H2O = dUMP + diphosphate + H(+). It functions in the pathway pyrimidine metabolism; dUMP biosynthesis; dUMP from dCTP (dUTP route): step 2/2. This enzyme is involved in nucleotide metabolism: it produces dUMP, the immediate precursor of thymidine nucleotides and it decreases the intracellular concentration of dUTP so that uracil cannot be incorporated into DNA. The protein is Deoxyuridine 5'-triphosphate nucleotidohydrolase of Salmonella enteritidis PT4 (strain P125109).